The primary structure comprises 56 residues: Ribosome biogenesis protein Nop10 (56 aa).

Belongs to the NOP10 family.

Involved in ribosome biogenesis; more specifically in 18S rRNA pseudouridylation and in cleavage of pre-rRNA. The sequence is that of Ribosome biogenesis protein Nop10 from Methanococcoides burtonii (strain DSM 6242 / NBRC 107633 / OCM 468 / ACE-M).